A 274-amino-acid chain; its full sequence is Acyl-[acyl-carrier-protein]--UDP-N-acetylglucosamine O-acyltransferase (274 aa).

The protein belongs to the transferase hexapeptide repeat family. LpxA subfamily. Homotrimer.

The protein resides in the cytoplasm. The enzyme catalyses a (3R)-hydroxyacyl-[ACP] + UDP-N-acetyl-alpha-D-glucosamine = a UDP-3-O-[(3R)-3-hydroxyacyl]-N-acetyl-alpha-D-glucosamine + holo-[ACP]. Its pathway is glycolipid biosynthesis; lipid IV(A) biosynthesis; lipid IV(A) from (3R)-3-hydroxytetradecanoyl-[acyl-carrier-protein] and UDP-N-acetyl-alpha-D-glucosamine: step 1/6. In terms of biological role, involved in the biosynthesis of lipid A, a phosphorylated glycolipid that anchors the lipopolysaccharide to the outer membrane of the cell. The polypeptide is Acyl-[acyl-carrier-protein]--UDP-N-acetylglucosamine O-acyltransferase (Bartonella bacilliformis (strain ATCC 35685 / KC583 / Herrer 020/F12,63)).